The sequence spans 81 residues: Acyl carrier protein (81 aa).

The region spanning 2-77 (ASIEERVVDI…EAIDFIEKEK (76 aa)) is the Carrier domain. Ser-37 is modified (O-(pantetheine 4'-phosphoryl)serine).

The protein belongs to the acyl carrier protein (ACP) family. 4'-phosphopantetheine is transferred from CoA to a specific serine of apo-ACP by AcpS. This modification is essential for activity because fatty acids are bound in thioester linkage to the sulfhydryl of the prosthetic group.

Its subcellular location is the cytoplasm. It functions in the pathway lipid metabolism; fatty acid biosynthesis. Its function is as follows. Carrier of the growing fatty acid chain in fatty acid biosynthesis. The polypeptide is Acyl carrier protein (Rhodopirellula baltica (strain DSM 10527 / NCIMB 13988 / SH1)).